Reading from the N-terminus, the 228-residue chain is Thrombin-like enzyme gyroxin analog (228 aa).

Residues 1-222 (VIGGDECNIN…YLDWIQSVIA (222 aa)) enclose the Peptidase S1 domain. Cystine bridges form between C7–C138, C28–C44, C78–C227, C117–C183, C149–C162, and C173–C198. The active-site Charge relay system is H43. N-linked (GlcNAc...) asparagine glycosylation is found at N45 and N81. Residue D88 is the Charge relay system of the active site. N-linked (GlcNAc...) asparagine glycosylation occurs at N145. Catalysis depends on S177, which acts as the Charge relay system. A glycan (N-linked (GlcNAc...) asparagine) is linked at N224.

It belongs to the peptidase S1 family. Snake venom subfamily. In terms of assembly, monomer. Expressed by the venom gland.

The protein localises to the secreted. It catalyses the reaction Selective cleavage of Arg-|-Xaa bond in fibrinogen, to form fibrin, and release fibrinopeptide A. The specificity of further degradation of fibrinogen varies with species origin of the enzyme.. Inhibited competitively by amidines and guanidines, and irreversibly inhibited by diisopropylfluorophosphate. Its function is as follows. Thrombin-like snake venom serine protease, that cleaves alpha-chain of fibrinogen (FGA) releases only fibrinopeptide A. Shows coagulant, esterase and amidase activities. Induces the barrel rotation syndrome in mice, which is manifested by gyroxin-like, rapid rolling motions. May also reversibly increase the permeability of the blood brain barrier (BBB) in mice. This is Thrombin-like enzyme gyroxin analog from Lachesis muta muta (Bushmaster).